Consider the following 38-residue polypeptide: Large ribosomal subunit protein bL36 (38 aa).

The protein belongs to the bacterial ribosomal protein bL36 family.

This Aster yellows witches'-broom phytoplasma (strain AYWB) protein is Large ribosomal subunit protein bL36.